Consider the following 261-residue polypeptide: Carbonic anhydrase 1 (261 aa).

Alanine 2 carries the N-acetylalanine modification. An Alpha-carbonic anhydrase domain is found at 4–261 (PDWGYDGENG…LKGRTVKASF (258 aa)). Residues 22–41 (PIANGNNQSPIDIKTSETKR) form a disordered region. The active-site Proton donor/acceptor is the histidine 65. Positions 95, 97, and 120 each coordinate Zn(2+). Residues threonine 200 and 200–201 (TH) each bind substrate.

It belongs to the alpha-carbonic anhydrase family. The cofactor is Zn(2+).

The protein localises to the cytoplasm. It carries out the reaction hydrogencarbonate + H(+) = CO2 + H2O. The enzyme catalyses urea = cyanamide + H2O. Inhibited by acetazolamide. In terms of biological role, catalyzes the reversible hydration of carbon dioxide. Can hydrate cyanamide to urea. This is Carbonic anhydrase 1 (CA1) from Ovis aries (Sheep).